The chain runs to 210 residues: Protein-methionine-sulfoxide reductase heme-binding subunit MsrQ (210 aa).

The next 4 helical transmembrane spans lie at 15–35 (DTLV…WLAW), 89–109 (LFAF…DLFF), 122–142 (PFIT…VTST), and 160–180 (LVYL…KADH).

Belongs to the MsrQ family. In terms of assembly, heterodimer of a catalytic subunit (MsrP) and a heme-binding subunit (MsrQ). The cofactor is FMN. It depends on heme b as a cofactor.

It is found in the cell inner membrane. In terms of biological role, part of the MsrPQ system that repairs oxidized periplasmic proteins containing methionine sulfoxide residues (Met-O), using respiratory chain electrons. Thus protects these proteins from oxidative-stress damage caused by reactive species of oxygen and chlorine generated by the host defense mechanisms. MsrPQ is essential for the maintenance of envelope integrity under bleach stress, rescuing a wide series of structurally unrelated periplasmic proteins from methionine oxidation. MsrQ provides electrons for reduction to the reductase catalytic subunit MsrP, using the quinone pool of the respiratory chain. The polypeptide is Protein-methionine-sulfoxide reductase heme-binding subunit MsrQ (Caulobacter vibrioides (strain ATCC 19089 / CIP 103742 / CB 15) (Caulobacter crescentus)).